The chain runs to 309 residues: Ribonuclease Z (309 aa).

His-63, His-65, Asp-67, His-68, His-145, Asp-216, and His-274 together coordinate Zn(2+). Residue Asp-67 is the Proton acceptor of the active site.

It belongs to the RNase Z family. As to quaternary structure, homodimer. Zn(2+) serves as cofactor.

The catalysed reaction is Endonucleolytic cleavage of RNA, removing extra 3' nucleotides from tRNA precursor, generating 3' termini of tRNAs. A 3'-hydroxy group is left at the tRNA terminus and a 5'-phosphoryl group is left at the trailer molecule.. In terms of biological role, zinc phosphodiesterase, which displays some tRNA 3'-processing endonuclease activity. Probably involved in tRNA maturation, by removing a 3'-trailer from precursor tRNA. The chain is Ribonuclease Z from Streptococcus agalactiae serotype Ia (strain ATCC 27591 / A909 / CDC SS700).